A 473-amino-acid chain; its full sequence is Siroheme synthase (473 aa).

The precorrin-2 dehydrogenase /sirohydrochlorin ferrochelatase stretch occupies residues 1-206 (MDYLPIFMKI…GNTGEAEALL (206 aa)). Residues 22 to 23 (TV) and 43 to 44 (PK) contribute to the NAD(+) site. A uroporphyrinogen-III C-methyltransferase region spans residues 223-473 (GEVYIIGAGP…KSLLDDRVPA (251 aa)). S-adenosyl-L-methionine is bound at residue Pro-232. The Proton acceptor role is filled by Asp-255. Residue Lys-277 is the Proton donor of the active site. S-adenosyl-L-methionine is bound by residues 308–310 (GGD), Ile-313, 338–339 (TA), Met-390, and Gly-419.

In the N-terminal section; belongs to the precorrin-2 dehydrogenase / sirohydrochlorin ferrochelatase family. The protein in the C-terminal section; belongs to the precorrin methyltransferase family.

The catalysed reaction is uroporphyrinogen III + 2 S-adenosyl-L-methionine = precorrin-2 + 2 S-adenosyl-L-homocysteine + H(+). It catalyses the reaction precorrin-2 + NAD(+) = sirohydrochlorin + NADH + 2 H(+). It carries out the reaction siroheme + 2 H(+) = sirohydrochlorin + Fe(2+). Its pathway is cofactor biosynthesis; adenosylcobalamin biosynthesis; precorrin-2 from uroporphyrinogen III: step 1/1. It functions in the pathway cofactor biosynthesis; adenosylcobalamin biosynthesis; sirohydrochlorin from precorrin-2: step 1/1. It participates in porphyrin-containing compound metabolism; siroheme biosynthesis; precorrin-2 from uroporphyrinogen III: step 1/1. The protein operates within porphyrin-containing compound metabolism; siroheme biosynthesis; siroheme from sirohydrochlorin: step 1/1. Its pathway is porphyrin-containing compound metabolism; siroheme biosynthesis; sirohydrochlorin from precorrin-2: step 1/1. In terms of biological role, multifunctional enzyme that catalyzes the SAM-dependent methylations of uroporphyrinogen III at position C-2 and C-7 to form precorrin-2 via precorrin-1. Then it catalyzes the NAD-dependent ring dehydrogenation of precorrin-2 to yield sirohydrochlorin. Finally, it catalyzes the ferrochelation of sirohydrochlorin to yield siroheme. This Hydrogenovibrio crunogenus (strain DSM 25203 / XCL-2) (Thiomicrospira crunogena) protein is Siroheme synthase.